The chain runs to 1058 residues: Carbamoyl phosphate synthase large chain (1058 aa).

The segment at 1 to 401 (MPKRTDIQKI…SLLKACRSLE (401 aa)) is carboxyphosphate synthetic domain. ATP contacts are provided by Arg-129, Arg-169, Gly-175, Gly-176, Arg-208, Ile-210, Glu-215, Gly-241, Ile-242, His-243, Gln-284, and Glu-298. The region spanning 133–327 (KQLMEELEQP…IAKLAAKIAV (195 aa)) is the ATP-grasp 1 domain. Residues Gln-284, Glu-298, and Asn-300 each coordinate Mg(2+). Residues Gln-284, Glu-298, and Asn-300 each contribute to the Mn(2+) site. Residues 402–546 (IGVHHNEIPE…YSTYGWENES (145 aa)) are oligomerization domain. Residues 547–929 (IRSDKESVLV…ALYKAFEASY (383 aa)) are carbamoyl phosphate synthetic domain. One can recognise an ATP-grasp 2 domain in the interval 671-861 (EQALKELDIP…MAQVATKLIL (191 aa)). Positions 707, 746, 748, 752, 777, 778, 779, 780, 820, and 832 each coordinate ATP. Mg(2+) is bound by residues Gln-820, Glu-832, and Asn-834. The Mn(2+) site is built by Gln-820, Glu-832, and Asn-834. An MGS-like domain is found at 930–1058 (LHLPTFGNVV…ESRSFVTEAI (129 aa)). An allosteric domain region spans residues 930–1058 (LHLPTFGNVV…ESRSFVTEAI (129 aa)).

It belongs to the CarB family. Composed of two chains; the small (or glutamine) chain promotes the hydrolysis of glutamine to ammonia, which is used by the large (or ammonia) chain to synthesize carbamoyl phosphate. Tetramer of heterodimers (alpha,beta)4. The cofactor is Mg(2+). Mn(2+) serves as cofactor.

The catalysed reaction is hydrogencarbonate + L-glutamine + 2 ATP + H2O = carbamoyl phosphate + L-glutamate + 2 ADP + phosphate + 2 H(+). It catalyses the reaction hydrogencarbonate + NH4(+) + 2 ATP = carbamoyl phosphate + 2 ADP + phosphate + 2 H(+). It participates in amino-acid biosynthesis; L-arginine biosynthesis; carbamoyl phosphate from bicarbonate: step 1/1. It functions in the pathway pyrimidine metabolism; UMP biosynthesis via de novo pathway; (S)-dihydroorotate from bicarbonate: step 1/3. Large subunit of the glutamine-dependent carbamoyl phosphate synthetase (CPSase). CPSase catalyzes the formation of carbamoyl phosphate from the ammonia moiety of glutamine, carbonate, and phosphate donated by ATP, constituting the first step of 2 biosynthetic pathways, one leading to arginine and/or urea and the other to pyrimidine nucleotides. The large subunit (synthetase) binds the substrates ammonia (free or transferred from glutamine from the small subunit), hydrogencarbonate and ATP and carries out an ATP-coupled ligase reaction, activating hydrogencarbonate by forming carboxy phosphate which reacts with ammonia to form carbamoyl phosphate. In Streptococcus pneumoniae (strain P1031), this protein is Carbamoyl phosphate synthase large chain.